The primary structure comprises 110 residues: PHD finger-like domain-containing protein 5A (110 aa).

Ala-2 bears the N-acetylalanine mark. An N6-acetyllysine modification is found at Lys-3. Zn(2+)-binding residues include Cys-11, Cys-23, Cys-26, Cys-30, Cys-33, Cys-46, Cys-49, Cys-58, Cys-61, Cys-72, and Cys-75. The interaction with SF3B1 and SF3B3 stretch occupies residues 35 to 51; that stretch reads SYVRPCTLVRICDECNY. Positions 79–82 are interaction with SF3B3; that stretch reads EKDR. Cys-85 is a binding site for Zn(2+). Ser-94 carries the phosphoserine modification.

This sequence belongs to the PHF5 family. Component of the 17S U2 SnRNP complex, a ribonucleoprotein complex that contains small nuclear RNA (snRNA) U2 and a number of specific proteins. Part of the SF3B subcomplex of the 17S U2 SnRNP complex. SF3B associates with the splicing subcomplex SF3A and a 12S RNA unit to form the U2 small nuclear ribonucleoproteins complex (U2 snRNP). Within the SF3B complex interacts directly with SF3B1 and SF3B3. Component of the minor spliceosome, which splices U12-type introns. Within this complex, interacts with CRIPT. Interacts (via N-terminus) with U2AF1 and SRSF5; acts to bridge the two. Interacts (via C-terminus) with EP400 and DDX1; acts to bridge the two. Interacts with the PAF1 complex (PAF1C) composed of CDC73, PAF1, LEO1, CTR9, RTF1 and SKIC8. Within the PAF1C interacts directly with CDC73 and SKIC8. Interacts with RNA polymerase II. Expressed in primary spermatocytes (at protein level). Ubiquitously expressed in pre- and postnatal tissues. Highly expressed in pluripotent embryonic stem cells (ESCs) (at protein level) and induced pluripotent stem cells (iPSCs).

It localises to the nucleus. The protein localises to the nucleus speckle. Its function is as follows. Component of the 17S U2 SnRNP complex of the spliceosome, a large ribonucleoprotein complex that removes introns from transcribed pre-mRNAs. The 17S U2 SnRNP complex (1) directly participates in early spliceosome assembly and (2) mediates recognition of the intron branch site during pre-mRNA splicing by promoting the selection of the pre-mRNA branch-site adenosine, the nucleophile for the first step of splicing. Within the 17S U2 SnRNP complex, PHF5A is part of the SF3B subcomplex, which is required for 'A' complex assembly formed by the stable binding of U2 snRNP to the branchpoint sequence in pre-mRNA. Sequence independent binding of SF3A and SF3B subcomplexes upstream of the branch site is essential, it may anchor U2 snRNP to the pre-mRNA. Also acts as a component of the minor spliceosome, which is involved in the splicing of U12-type introns in pre-mRNAs. Also involved in elongation by RNA polymerase II as part of the PAF1 complex (PAF1C). PAF1C is required for maintenance of embryonic stem cell (ESC) self-renewal and cellular reprogramming of stem cells. Maintains pluripotency by recruiting and stabilizing PAF1C on pluripotency genes loci, and by regulating the expression of the pluripotency genes. Regulates the deposition of elongation-associated histone modifications, including dimethylated histone H3 'Lys-79' (H3K79me2) and trimethylated histone H3 'Lys-36' (H3K36me3), on PAF1C targets, self-renewal and pluripotency genes. Regulates RNA polymerase II promoter-proximal pause release of the PAF1C targets and self-renewal genes, and the levels of elongating ('Ser-2' phosphorylated) RNA polymerase II in their gene bodies. Regulates muscle specification in adult stem cells by stabilizing PAF1C in chromatin to promote myogenic differentiation. Acts as a transcriptional regulator by binding to the GJA1/Cx43 promoter and enhancing its up-regulation by ESR1/ER-alpha. The chain is PHD finger-like domain-containing protein 5A (Phf5a) from Mus musculus (Mouse).